Consider the following 391-residue polypeptide: Ferrochelatase (391 aa).

Fe cation is bound by residues histidine 196 and glutamate 281.

The protein belongs to the ferrochelatase family.

The protein localises to the cytoplasm. It carries out the reaction heme b + 2 H(+) = protoporphyrin IX + Fe(2+). The protein operates within porphyrin-containing compound metabolism; protoheme biosynthesis; protoheme from protoporphyrin-IX: step 1/1. Catalyzes the ferrous insertion into protoporphyrin IX. This Synechococcus sp. (strain CC9311) protein is Ferrochelatase.